The sequence spans 277 residues: UBX domain-containing protein 10 (277 aa).

The disordered stretch occupies residues 1 to 102 (MAIEAPVNFA…APDEMPELLL (102 aa)). A compositionally biased stretch (polar residues) spans 16-31 (TVVSTAGDSSTWQPSS). The segment covering 35 to 50 (HVIRPKSAKGRKRPNL) has biased composition (basic residues). The segment covering 60 to 77 (SPSALSSSPPPRSSGSPS) has biased composition (low complexity). Ser-88 bears the Phosphoserine mark. One can recognise a UBX domain in the interval 191-268 (DEEPRLLLAV…GILHKSVLGI (78 aa)).

This sequence belongs to the UBXN10 family. Interacts with CLUAP1; the interaction is direct and mediates interaction with the intraflagellar transport complex B (IFT-B). Interacts with VCP; the interaction is direct.

Its subcellular location is the cell projection. It localises to the cilium. Functionally, VCP/p97-binding protein required for ciliogenesis. Acts as a tethering factor that facilitates recruitment of VCP/p97 to the intraflagellar transport complex B (IFT-B) in cilia. UBX domain-containing proteins act as tethering factors for VCP/p97 and may specify substrate specificity of VCP/p97. In Mus musculus (Mouse), this protein is UBX domain-containing protein 10.